Reading from the N-terminus, the 494-residue chain is Ubiquinol-cytochrome-c reductase complex core protein I, mitochondrial (494 aa).

Residue H70 coordinates Zn(2+). E73 (proton acceptor) is an active-site residue. Zn(2+) is bound by residues H74 and E150.

The protein belongs to the peptidase M16 family. UQCRC1/QCR1 subfamily. In terms of assembly, component of the ubiquinol-cytochrome c oxidoreductase (cytochrome b-c1 complex, complex III, CIII), a multisubunit enzyme composed of 10 subunits. The complex is composed of 3 respiratory subunits cytochrome b, cytochrome c1 and Rieske protein, 2 core protein subunits, and additional low-molecular weight protein subunits. The complex exists as an obligatory dimer and forms supercomplexes (SCs) in the inner mitochondrial membrane with cytochrome c oxidase (complex IV, CIV). Zn(2+) is required as a cofactor. The N-terminus is blocked.

The protein resides in the mitochondrion inner membrane. Component of the ubiquinol-cytochrome c oxidoreductase, a multisubunit transmembrane complex that is part of the mitochondrial electron transport chain which drives oxidative phosphorylation. The respiratory chain contains 3 multisubunit complexes succinate dehydrogenase (complex II, CII), ubiquinol-cytochrome c oxidoreductase (cytochrome b-c1 complex, complex III, CIII) and cytochrome c oxidase (complex IV, CIV), that cooperate to transfer electrons derived from NADH and succinate to molecular oxygen, creating an electrochemical gradient over the inner membrane that drives transmembrane transport and the ATP synthase. The cytochrome b-c1 complex catalyzes electron transfer from ubiquinol to cytochrome c, linking this redox reaction to translocation of protons across the mitochondrial inner membrane, with protons being carried across the membrane as hydrogens on the quinol. In the process called Q cycle, 2 protons are consumed from the matrix, 4 protons are released into the intermembrane space and 2 electrons are passed to cytochrome c. The sequence is that of Ubiquinol-cytochrome-c reductase complex core protein I, mitochondrial from Euglena gracilis.